We begin with the raw amino-acid sequence, 488 residues long: Protein nucleotidyltransferase YdiU (488 aa).

ATP is bound by residues Gly91, Gly93, Arg94, Lys114, Asp126, Gly127, Arg177, and Arg184. The active-site Proton acceptor is the Asp253. Residues Asn254 and Asp263 each coordinate Mg(2+). Asp263 lines the ATP pocket.

The protein belongs to the SELO family. The cofactor is Mg(2+). It depends on Mn(2+) as a cofactor.

The enzyme catalyses L-seryl-[protein] + ATP = 3-O-(5'-adenylyl)-L-seryl-[protein] + diphosphate. The catalysed reaction is L-threonyl-[protein] + ATP = 3-O-(5'-adenylyl)-L-threonyl-[protein] + diphosphate. It catalyses the reaction L-tyrosyl-[protein] + ATP = O-(5'-adenylyl)-L-tyrosyl-[protein] + diphosphate. It carries out the reaction L-histidyl-[protein] + UTP = N(tele)-(5'-uridylyl)-L-histidyl-[protein] + diphosphate. The enzyme catalyses L-seryl-[protein] + UTP = O-(5'-uridylyl)-L-seryl-[protein] + diphosphate. The catalysed reaction is L-tyrosyl-[protein] + UTP = O-(5'-uridylyl)-L-tyrosyl-[protein] + diphosphate. In terms of biological role, nucleotidyltransferase involved in the post-translational modification of proteins. It can catalyze the addition of adenosine monophosphate (AMP) or uridine monophosphate (UMP) to a protein, resulting in modifications known as AMPylation and UMPylation. This is Protein nucleotidyltransferase YdiU from Bacillus mycoides (strain KBAB4) (Bacillus weihenstephanensis).